Reading from the N-terminus, the 139-residue chain is D-ribose pyranase (139 aa).

The Proton donor role is filled by H20. Substrate is bound by residues D28, H106, and 128–130 (FAN).

The protein belongs to the RbsD / FucU family. RbsD subfamily. In terms of assembly, homodecamer.

The protein localises to the cytoplasm. It catalyses the reaction beta-D-ribopyranose = beta-D-ribofuranose. The protein operates within carbohydrate metabolism; D-ribose degradation; D-ribose 5-phosphate from beta-D-ribopyranose: step 1/2. In terms of biological role, catalyzes the interconversion of beta-pyran and beta-furan forms of D-ribose. The chain is D-ribose pyranase from Yersinia enterocolitica serotype O:8 / biotype 1B (strain NCTC 13174 / 8081).